Here is a 1372-residue protein sequence, read N- to C-terminus: DNA-directed RNA polymerase subunit beta' (1372 aa).

4 residues coordinate Zn(2+): C69, C71, C84, and C87. 3 residues coordinate Mg(2+): D460, D462, and D464. 4 residues coordinate Zn(2+): C808, C882, C889, and C892.

The protein belongs to the RNA polymerase beta' chain family. The RNAP catalytic core consists of 2 alpha, 1 beta, 1 beta' and 1 omega subunit. When a sigma factor is associated with the core the holoenzyme is formed, which can initiate transcription. Mg(2+) serves as cofactor. The cofactor is Zn(2+).

The enzyme catalyses RNA(n) + a ribonucleoside 5'-triphosphate = RNA(n+1) + diphosphate. Functionally, DNA-dependent RNA polymerase catalyzes the transcription of DNA into RNA using the four ribonucleoside triphosphates as substrates. This chain is DNA-directed RNA polymerase subunit beta', found in Rickettsia rickettsii (strain Iowa).